The following is a 132-amino-acid chain: Small ribosomal subunit protein uS9 (132 aa).

Positions 103-132 are disordered; sequence NGLLTRDDRTKERKKPGLKRARKAPQYTKR. Residues 114 to 132 show a composition bias toward basic residues; it reads ERKKPGLKRARKAPQYTKR.

It belongs to the universal ribosomal protein uS9 family.

The polypeptide is Small ribosomal subunit protein uS9 (Dehalococcoides mccartyi (strain CBDB1)).